A 170-amino-acid chain; its full sequence is Zinc finger matrin-type protein 5 (170 aa).

The segment at 51-79 (EQNKRPCRKFLLTGQCDFGSNCRFSHMSE) adopts a C3H1-type zinc-finger fold. Residues 150–170 (PPSLRAPPPGGWPLQPSVQWG) are disordered.

As to quaternary structure, component of the U11/U12 snRNPs that are part of the U12-type spliceosome.

The protein resides in the nucleus. The chain is Zinc finger matrin-type protein 5 (ZMAT5) from Bos taurus (Bovine).